Reading from the N-terminus, the 196-residue chain is Probable GTP-binding protein EngB (196 aa).

An EngB-type G domain is found at 22-194 (DKKEIAFAGR…LKTIGEILGD (173 aa)). GTP is bound by residues 30-37 (GRSNVGKS), 56-60 (GKTRS), 74-77 (DLPG), 141-144 (TKSD), and 173-175 (FSS). Mg(2+) contacts are provided by S37 and T58.

It belongs to the TRAFAC class TrmE-Era-EngA-EngB-Septin-like GTPase superfamily. EngB GTPase family. Requires Mg(2+) as cofactor.

Functionally, necessary for normal cell division and for the maintenance of normal septation. This is Probable GTP-binding protein EngB from Petrotoga mobilis (strain DSM 10674 / SJ95).